We begin with the raw amino-acid sequence, 417 residues long: MSNVKKIKGFADLFSPESDVFTFMENTARDVFSSYGYGELRTPILERTELFCRSIGTETDVVQKEMYTFPDRKNRSLTMRPEATAGVMRAYIEGSLHSQEQVSKLFTFGPMFRYERPQKGRMRQFHQINCECLGPQEPYADAEIILMLLMFLKRIGLSGLELQINSLGCRECRPQYHAALRAFLASLDTAELCEDCRRRMETNPLRVLDCKVPRCKELTADAPVILDHTCDACSEHHSVVLGMLERAGVVYTANPRLVRGLDYYNRTTFEVVCGEIGAQSSVAGGGRYDGLVSQLGGPDVPGIGFACGMERLALALEQKAQREVPRPDFLVAVLEQDGLERGMMLAEALRESGLKGEVSFAARSMKSQMRQAGKRNVRKVLLLGGSEIADGTVTVKDMDTGGQTTISLDAAPGAVAD.

This sequence belongs to the class-II aminoacyl-tRNA synthetase family. Homodimer.

Its subcellular location is the cytoplasm. The catalysed reaction is tRNA(His) + L-histidine + ATP = L-histidyl-tRNA(His) + AMP + diphosphate + H(+). The polypeptide is Histidine--tRNA ligase (Oleidesulfovibrio alaskensis (strain ATCC BAA-1058 / DSM 17464 / G20) (Desulfovibrio alaskensis)).